A 310-amino-acid polypeptide reads, in one-letter code: Methionyl-tRNA formyltransferase (310 aa).

109–112 (SLLP) provides a ligand contact to (6S)-5,6,7,8-tetrahydrofolate.

This sequence belongs to the Fmt family.

The catalysed reaction is L-methionyl-tRNA(fMet) + (6R)-10-formyltetrahydrofolate = N-formyl-L-methionyl-tRNA(fMet) + (6S)-5,6,7,8-tetrahydrofolate + H(+). Its function is as follows. Attaches a formyl group to the free amino group of methionyl-tRNA(fMet). The formyl group appears to play a dual role in the initiator identity of N-formylmethionyl-tRNA by promoting its recognition by IF2 and preventing the misappropriation of this tRNA by the elongation apparatus. This is Methionyl-tRNA formyltransferase from Chloroflexus aurantiacus (strain ATCC 29366 / DSM 635 / J-10-fl).